The primary structure comprises 788 residues: Phosphoribosylformylglycinamidine synthase subunit PurL (788 aa).

Residue H50 is part of the active site. Y53 and K92 together coordinate ATP. E94 provides a ligand contact to Mg(2+). Substrate contacts are provided by residues S95–H98 and R117. The Proton acceptor role is filled by H96. Mg(2+) is bound at residue D118. Q241 contributes to the substrate binding site. Residue D269 participates in Mg(2+) binding. A substrate-binding site is contributed by E313–Q315. D524 and G561 together coordinate ATP. N562 is a binding site for Mg(2+). S564 serves as a coordination point for substrate.

Belongs to the FGAMS family. Monomer. Part of the FGAM synthase complex composed of 1 PurL, 1 PurQ and 2 PurS subunits.

The protein localises to the cytoplasm. The enzyme catalyses N(2)-formyl-N(1)-(5-phospho-beta-D-ribosyl)glycinamide + L-glutamine + ATP + H2O = 2-formamido-N(1)-(5-O-phospho-beta-D-ribosyl)acetamidine + L-glutamate + ADP + phosphate + H(+). It participates in purine metabolism; IMP biosynthesis via de novo pathway; 5-amino-1-(5-phospho-D-ribosyl)imidazole from N(2)-formyl-N(1)-(5-phospho-D-ribosyl)glycinamide: step 1/2. In terms of biological role, part of the phosphoribosylformylglycinamidine synthase complex involved in the purines biosynthetic pathway. Catalyzes the ATP-dependent conversion of formylglycinamide ribonucleotide (FGAR) and glutamine to yield formylglycinamidine ribonucleotide (FGAM) and glutamate. The FGAM synthase complex is composed of three subunits. PurQ produces an ammonia molecule by converting glutamine to glutamate. PurL transfers the ammonia molecule to FGAR to form FGAM in an ATP-dependent manner. PurS interacts with PurQ and PurL and is thought to assist in the transfer of the ammonia molecule from PurQ to PurL. In Nostoc punctiforme (strain ATCC 29133 / PCC 73102), this protein is Phosphoribosylformylglycinamidine synthase subunit PurL.